Reading from the N-terminus, the 646-residue chain is Cell surface glycoprotein MUC18 (646 aa).

Positions 1 to 23 (MGLPRLVCAFLLAACCCCPRVAG) are cleaved as a signal peptide. Ig-like V-type domains are found at residues 24-129 (VPGE…YRIQ) and 139-242 (PNIQ…REVT). The Extracellular portion of the chain corresponds to 24–559 (VPGEAEQPAP…RKLPEPESRG (536 aa)). Disulfide bonds link cysteine 48/cysteine 116, cysteine 161/cysteine 223, cysteine 272/cysteine 320, and cysteine 365/cysteine 407. N-linked (GlcNAc...) asparagine glycosylation occurs at asparagine 56. 3 Ig-like C2-type domains span residues 244–330 (PVFY…TMIS), 335–424 (PQEL…QLVN), and 430–510 (PPWM…KNTS). The disordered stretch occupies residues 278 to 299 (PPPHFSISKQNPSTREAEEETT). N-linked (GlcNAc...) asparagine glycosylation is found at asparagine 418, asparagine 449, asparagine 467, asparagine 508, asparagine 518, asparagine 527, and asparagine 544. Residues cysteine 452 and cysteine 499 are joined by a disulfide bond. Positions 525–554 (DSNTTTGLSTSTASPHTRANSTSTERKLPE) are disordered. A compositionally biased stretch (polar residues) spans 533 to 547 (STSTASPHTRANSTS). The helical transmembrane segment at 560 to 583 (VVIVAVIVCILVLAVLGAVLYFLY) threads the bilayer. At 584 to 646 (KKGKLPCRRS…QGEKYIDLRH (63 aa)) the chain is on the cytoplasmic side. Residues serine 606, serine 614, and serine 628 each carry the phosphoserine modification. The disordered stretch occupies residues 620–646 (EMGLLQGSSGDKRAPGDQGEKYIDLRH). Basic and acidic residues predominate over residues 629–646 (GDKRAPGDQGEKYIDLRH).

As to expression, detected in endothelial cells in vascular tissue throughout the body. May appear at the surface of neural crest cells during their embryonic migration. Appears to be limited to vascular smooth muscle in normal adult tissues. Associated with tumor progression and the development of metastasis in human malignant melanoma. Expressed most strongly on metastatic lesions and advanced primary tumors and is only rarely detected in benign melanocytic nevi and thin primary melanomas with a low probability of metastasis.

It is found in the membrane. Plays a role in cell adhesion, and in cohesion of the endothelial monolayer at intercellular junctions in vascular tissue. Its expression may allow melanoma cells to interact with cellular elements of the vascular system, thereby enhancing hematogeneous tumor spread. Could be an adhesion molecule active in neural crest cells during embryonic development. Acts as a surface receptor that triggers tyrosine phosphorylation of FYN and PTK2/FAK1, and a transient increase in the intracellular calcium concentration. The chain is Cell surface glycoprotein MUC18 (MCAM) from Homo sapiens (Human).